Reading from the N-terminus, the 407-residue chain is S-adenosylmethionine synthase (407 aa).

An ATP-binding site is contributed by His21. A Mg(2+)-binding site is contributed by Asp23. Glu49 lines the K(+) pocket. L-methionine is bound by residues Glu62 and Gln105. A flexible loop region spans residues 105 to 115 (QSQEIGAGVDA). ATP-binding positions include 179-181 (DGK), Asp259, 265-266 (RK), Ala282, and Lys286. Residue Asp259 coordinates L-methionine. An L-methionine-binding site is contributed by Lys290.

This sequence belongs to the AdoMet synthase family. As to quaternary structure, homotetramer; dimer of dimers. It depends on Mg(2+) as a cofactor. The cofactor is K(+).

The protein resides in the cytoplasm. The enzyme catalyses L-methionine + ATP + H2O = S-adenosyl-L-methionine + phosphate + diphosphate. Its pathway is amino-acid biosynthesis; S-adenosyl-L-methionine biosynthesis; S-adenosyl-L-methionine from L-methionine: step 1/1. In terms of biological role, catalyzes the formation of S-adenosylmethionine (AdoMet) from methionine and ATP. The overall synthetic reaction is composed of two sequential steps, AdoMet formation and the subsequent tripolyphosphate hydrolysis which occurs prior to release of AdoMet from the enzyme. The polypeptide is S-adenosylmethionine synthase (Corynebacterium aurimucosum (strain ATCC 700975 / DSM 44827 / CIP 107346 / CN-1) (Corynebacterium nigricans)).